Here is a 505-residue protein sequence, read N- to C-terminus: Argininosuccinate lyase (505 aa).

It belongs to the lyase 1 family. Argininosuccinate lyase subfamily.

Its subcellular location is the cytoplasm. It carries out the reaction 2-(N(omega)-L-arginino)succinate = fumarate + L-arginine. The protein operates within amino-acid biosynthesis; L-arginine biosynthesis; L-arginine from L-ornithine and carbamoyl phosphate: step 3/3. The chain is Argininosuccinate lyase from Rhodococcoides fascians (Rhodococcus fascians).